The chain runs to 146 residues: Transcriptional regulator MraZ (146 aa).

2 SpoVT-AbrB domains span residues serine 5–glutamate 50 and alanine 77–glutamine 120.

This sequence belongs to the MraZ family. In terms of assembly, forms oligomers.

Its subcellular location is the cytoplasm. It is found in the nucleoid. This chain is Transcriptional regulator MraZ, found in Desulforapulum autotrophicum (strain ATCC 43914 / DSM 3382 / VKM B-1955 / HRM2) (Desulfobacterium autotrophicum).